A 381-amino-acid chain; its full sequence is Spermidine/putrescine import ATP-binding protein PotA (381 aa).

One can recognise an ABC transporter domain in the interval 22–252 (VELRNVFKFF…PKTSFVADFI (231 aa)). 54-61 (GPSGCGKT) contributes to the ATP binding site.

The protein belongs to the ABC transporter superfamily. Spermidine/putrescine importer (TC 3.A.1.11.1) family. In terms of assembly, the complex is composed of two ATP-binding proteins (PotA), two transmembrane proteins (PotB and PotC) and a solute-binding protein (PotD).

The protein localises to the cell inner membrane. The enzyme catalyses ATP + H2O + polyamine-[polyamine-binding protein]Side 1 = ADP + phosphate + polyamineSide 2 + [polyamine-binding protein]Side 1.. Functionally, part of the ABC transporter complex PotABCD involved in spermidine/putrescine import. Responsible for energy coupling to the transport system. The chain is Spermidine/putrescine import ATP-binding protein PotA from Trichormus variabilis (strain ATCC 29413 / PCC 7937) (Anabaena variabilis).